Consider the following 435-residue polypeptide: Acetyltransferase atnC (435 aa).

Transmembrane regions (helical) follow at residues 10–30 (AFAN…FLII), 40–60 (YFGI…APTL), and 68–88 (SFLA…LLIL). N-linked (GlcNAc...) asparagine glycosylation occurs at Asn-203. Transmembrane regions (helical) follow at residues 306–326 (FLVF…MGLS), 333–353 (IPYF…QAFY), and 370–390 (VVGF…YMFP). The N-linked (GlcNAc...) asparagine glycan is linked to Asn-406. Residues 407–427 (LTEVIGMPMMWGLLGTFGMLV) form a helical membrane-spanning segment.

This sequence belongs to the wax synthase family.

It is found in the membrane. It functions in the pathway secondary metabolite biosynthesis; terpenoid biosynthesis. In terms of biological role, acetyltransferase; part of the gene cluster that mediates the biosynthesis of the meroterpenoids arthripenoids. The pathway begins with the HR-PKS atnH that catalyzes two chain-extension steps to form a reduced triketide, which then primes the SAT domain in the NR-PKS atnG to initiate three more cycles of extension to give a linear hexaketide corresponding to the polyketide part of arthripenoids. The FAD-dependent monooxygenase atnJ then performs an oxidative decarboxylation at C11 of the atnH/atnG product, via an electrophilic aromatic hydroxylation with concomitant ipso-decarboxylation. The membrane-bound polyprenyl transferase atnF then introduces a farnesyl group before the FAD-dependent monooxygenase atnK functions as the first epoxidase on terminal C12'-C13' olefin, followed by a second epoxidation on C7'-C8' catalyzed by atnA. The terpene cyclase/mutase atnI then initiates the sequential tricyclic ring formation through protonation of the terminal epoxide and catalyzes the regioselective and stereoselective 6/6/6-tricyclic ring formation. The cytochrome P450 monooxygenase atnM is responsible for hydroxylating both C1' and C10'. The next steps may involve ketoreduction and acetyl transfer by the ketoreductase atnB and the acetyltransferase atnC, and lead to the production of arthripenoid B, the final biosynthetic product of the atn cluster. The hydroquinone moiety in arthripenoid B is prone to undergo spontaneous oxidation to afford a benzoquinone compound, a key intermediate for generating structure diversity. For instance, addition of a cysteine followed by ring contraction gives arthripenoid A, tautomerization gives the main product arthripenoid C, addition of a molecular of water or amine affords arthripenoid D or E, respectively, and loss of one water forms arthripenoid F. In Arthrinium sp, this protein is Acetyltransferase atnC.